The primary structure comprises 441 residues: tRNA-2-methylthio-N(6)-dimethylallyladenosine synthase (441 aa).

Residues 5–121 enclose the MTTase N-terminal domain; that stretch reads KKLFIKTYGC…LPQMEARLRE (117 aa). Residues C14, C50, C84, C159, C163, and C166 each coordinate [4Fe-4S] cluster. One can recognise a Radical SAM core domain in the interval 145–380; sequence ARRAPSAFLT…TRQQQDIQQS (236 aa). Residues 379–441 enclose the TRAM domain; it reads QSMVGRDVSV…RNSLAAVTLA (63 aa).

This sequence belongs to the methylthiotransferase family. MiaB subfamily. Monomer. Requires [4Fe-4S] cluster as cofactor.

Its subcellular location is the cytoplasm. It catalyses the reaction N(6)-dimethylallyladenosine(37) in tRNA + (sulfur carrier)-SH + AH2 + 2 S-adenosyl-L-methionine = 2-methylsulfanyl-N(6)-dimethylallyladenosine(37) in tRNA + (sulfur carrier)-H + 5'-deoxyadenosine + L-methionine + A + S-adenosyl-L-homocysteine + 2 H(+). Functionally, catalyzes the methylthiolation of N6-(dimethylallyl)adenosine (i(6)A), leading to the formation of 2-methylthio-N6-(dimethylallyl)adenosine (ms(2)i(6)A) at position 37 in tRNAs that read codons beginning with uridine. This Roseobacter denitrificans (strain ATCC 33942 / OCh 114) (Erythrobacter sp. (strain OCh 114)) protein is tRNA-2-methylthio-N(6)-dimethylallyladenosine synthase.